The primary structure comprises 486 residues: uncharacterized protein (486 aa).

I24–A35 is an NAD(+) binding site.

Belongs to the mannitol dehydrogenase family. UxuB subfamily.

This is an uncharacterized protein from Escherichia coli (strain K12).